Reading from the N-terminus, the 875-residue chain is Translation initiation factor IF-2 (875 aa).

Disordered regions lie at residues 1–20 (MSDSDKKPTLGRRPLGLKTA), 47–102 (LMGR…LREA), and 126–246 (EEER…DRRG). Residues 54–66 (AAPTAAPAAAATP) are compositionally biased toward low complexity. A compositionally biased stretch (pro residues) spans 67–85 (APTPVAPPPPPPPPPPPPS). Basic and acidic residues-rich tracts occupy residues 88–102 (RETRQEMQVRLLREA) and 126–140 (EEERRRAEEKARAEA). Low complexity-rich tracts occupy residues 141-195 (EAAA…PAAP) and 202-221 (PAAPAVPAPRRFTPVAPAAP). Basic and acidic residues predominate over residues 223 to 246 (KRPELAAKKPAHPQRDRKTEDRRG). Positions 374 to 544 (ARPPVVTIMG…LLQAELLELK (171 aa)) constitute a tr-type G domain. The G1 stretch occupies residues 383–390 (GHVDHGKT). A GTP-binding site is contributed by 383–390 (GHVDHGKT). Positions 408–412 (GITQH) are G2. Residues 430–433 (DTPG) form a G3 region. GTP is bound by residues 430 to 434 (DTPGH) and 484 to 487 (TKAD). Positions 484–487 (TKAD) are G4. The interval 520 to 522 (SAK) is G5.

It belongs to the TRAFAC class translation factor GTPase superfamily. Classic translation factor GTPase family. IF-2 subfamily.

It is found in the cytoplasm. One of the essential components for the initiation of protein synthesis. Protects formylmethionyl-tRNA from spontaneous hydrolysis and promotes its binding to the 30S ribosomal subunits. Also involved in the hydrolysis of GTP during the formation of the 70S ribosomal complex. The protein is Translation initiation factor IF-2 of Novosphingobium aromaticivorans (strain ATCC 700278 / DSM 12444 / CCUG 56034 / CIP 105152 / NBRC 16084 / F199).